The chain runs to 313 residues: MKTLLLLIPLVLTACGTLTGIPAHGGGKRFAVEQELVAASSRAAVKEMDLSALKGRKAALYVSVMGDQGSGNISGGRYSIDALIRGGYHNNPESATQYSYPAYDTTATTKSDALSSVTTSTSLLNAPAAALTKNSGRKGERSAGLSVNGTGDYRNETLLANPRDVSFLTNLIQTVFYLRGIEVVPPEYADTDVFVTVDVFGTVRSRTELHLYNAETLKAQTKLEYFAVDRDSRKLLIAPKTAAYESQYQEQYALWMGPYSVGKTVKASDRLMVDFSDITPYGDTTAQNRPDFKQNNGKKPDVGNEVIRRRKGG.

Positions 1–14 (MKTLLLLIPLVLTA) are cleaved as a signal peptide. C15 carries the N-palmitoyl cysteine lipid modification. The S-diacylglycerol cysteine moiety is linked to residue C15. Residues 282–297 (GDTTAQNRPDFKQNNG) show a composition bias toward polar residues. The tract at residues 282–313 (GDTTAQNRPDFKQNNGKKPDVGNEVIRRRKGG) is disordered.

It belongs to the MafA family.

It localises to the cell outer membrane. This chain is Adhesin MafA 2 (mafA2), found in Neisseria meningitidis serogroup A / serotype 4A (strain DSM 15465 / Z2491).